The chain runs to 208 residues: Thymidylate kinase (208 aa).

10–17 lines the ATP pocket; the sequence is GPEGSGKT.

It belongs to the thymidylate kinase family.

The enzyme catalyses dTMP + ATP = dTDP + ADP. In terms of biological role, phosphorylation of dTMP to form dTDP in both de novo and salvage pathways of dTTP synthesis. This is Thymidylate kinase from Bacillus cereus (strain AH187).